A 358-amino-acid chain; its full sequence is Protein RecA (358 aa).

67–74 provides a ligand contact to ATP; sequence GPESSGKT.

Belongs to the RecA family.

It is found in the cytoplasm. Functionally, can catalyze the hydrolysis of ATP in the presence of single-stranded DNA, the ATP-dependent uptake of single-stranded DNA by duplex DNA, and the ATP-dependent hybridization of homologous single-stranded DNAs. It interacts with LexA causing its activation and leading to its autocatalytic cleavage. This chain is Protein RecA, found in Xenorhabdus nematophila (strain ATCC 19061 / DSM 3370 / CCUG 14189 / LMG 1036 / NCIMB 9965 / AN6).